A 702-amino-acid polypeptide reads, in one-letter code: Methionine--tRNA ligase (702 aa).

Positions 23–33 (PYANGPLHLGH) match the 'HIGH' region motif. Positions 154, 157, 167, and 170 each coordinate Zn(2+). The 'KMSKS' region signature appears at 341 to 345 (KMSKS). Lys-344 serves as a coordination point for ATP. The disordered stretch occupies residues 562-593 (LAPPPASAKQQNASMSNTAPPPTAEEPETTAP). Polar residues predominate over residues 569-578 (AKQQNASMSN). The tRNA-binding domain occupies 599–702 (DFAKLDLRIG…SSAQPGMPVR (104 aa)).

Belongs to the class-I aminoacyl-tRNA synthetase family. MetG type 1 subfamily. Homodimer. It depends on Zn(2+) as a cofactor.

The protein resides in the cytoplasm. It carries out the reaction tRNA(Met) + L-methionine + ATP = L-methionyl-tRNA(Met) + AMP + diphosphate. Functionally, is required not only for elongation of protein synthesis but also for the initiation of all mRNA translation through initiator tRNA(fMet) aminoacylation. The polypeptide is Methionine--tRNA ligase (Xylella fastidiosa (strain M23)).